We begin with the raw amino-acid sequence, 259 residues long: Imidazole glycerol phosphate synthase subunit HisF (259 aa).

Catalysis depends on residues Asp-11 and Asp-130.

This sequence belongs to the HisA/HisF family. In terms of assembly, heterodimer of HisH and HisF.

Its subcellular location is the cytoplasm. The catalysed reaction is 5-[(5-phospho-1-deoxy-D-ribulos-1-ylimino)methylamino]-1-(5-phospho-beta-D-ribosyl)imidazole-4-carboxamide + L-glutamine = D-erythro-1-(imidazol-4-yl)glycerol 3-phosphate + 5-amino-1-(5-phospho-beta-D-ribosyl)imidazole-4-carboxamide + L-glutamate + H(+). It functions in the pathway amino-acid biosynthesis; L-histidine biosynthesis; L-histidine from 5-phospho-alpha-D-ribose 1-diphosphate: step 5/9. In terms of biological role, IGPS catalyzes the conversion of PRFAR and glutamine to IGP, AICAR and glutamate. The HisF subunit catalyzes the cyclization activity that produces IGP and AICAR from PRFAR using the ammonia provided by the HisH subunit. The chain is Imidazole glycerol phosphate synthase subunit HisF from Desulfosudis oleivorans (strain DSM 6200 / JCM 39069 / Hxd3) (Desulfococcus oleovorans).